We begin with the raw amino-acid sequence, 806 residues long: Glycerol-3-phosphate acyltransferase (806 aa).

The HXXXXD motif motif lies at 305-310 (CHRSHM).

This sequence belongs to the GPAT/DAPAT family.

The protein resides in the cell inner membrane. It catalyses the reaction sn-glycerol 3-phosphate + an acyl-CoA = a 1-acyl-sn-glycero-3-phosphate + CoA. It participates in phospholipid metabolism; CDP-diacylglycerol biosynthesis; CDP-diacylglycerol from sn-glycerol 3-phosphate: step 1/3. This is Glycerol-3-phosphate acyltransferase from Enterobacter sp. (strain 638).